The primary structure comprises 184 residues: Potassium-transporting ATPase KdpC subunit (184 aa).

A helical transmembrane segment spans residues 6–26; the sequence is TAVLYTIISAVFLGLGYPLIM.

The protein belongs to the KdpC family. In terms of assembly, the system is composed of three essential subunits: KdpA, KdpB and KdpC.

Its subcellular location is the cell inner membrane. Functionally, part of the high-affinity ATP-driven potassium transport (or Kdp) system, which catalyzes the hydrolysis of ATP coupled with the electrogenic transport of potassium into the cytoplasm. This subunit acts as a catalytic chaperone that increases the ATP-binding affinity of the ATP-hydrolyzing subunit KdpB by the formation of a transient KdpB/KdpC/ATP ternary complex. The protein is Potassium-transporting ATPase KdpC subunit of Acidobacterium capsulatum (strain ATCC 51196 / DSM 11244 / BCRC 80197 / JCM 7670 / NBRC 15755 / NCIMB 13165 / 161).